The sequence spans 587 residues: Chaperonin CPN60, mitochondrial (587 aa).

The transit peptide at 1 to 32 (MYRLISSIASKARVARNCTSQIGSRLSSTRNY) directs the protein to the mitochondrion.

The protein belongs to the chaperonin (HSP60) family.

Its subcellular location is the mitochondrion. In terms of biological role, implicated in mitochondrial protein import and macromolecular assembly. May facilitate the correct folding of imported proteins. May also prevent misfolding and promote the refolding and proper assembly of unfolded polypeptides generated under stress conditions in the mitochondrial matrix. The polypeptide is Chaperonin CPN60, mitochondrial (Brassica napus (Rape)).